We begin with the raw amino-acid sequence, 157 residues long: Succinate dehydrogenase [ubiquinone] cytochrome b small subunit, mitochondrial (157 aa).

The transit peptide at 1 to 45 (MAALVLLRAGLARPRGVPTALLRGTLLRHSAVLTAAADRSAPARQ) directs the protein to the mitochondrion. Topologically, residues 46–61 (SHGGAPQGHGSSKAAS) are mitochondrial matrix. Residues 62-83 (LHWTSERAVSALLLGLLPAAYL) traverse the membrane as a helical segment. Over 84-88 (YPGPA) the chain is Mitochondrial intermembrane. Residues 89 to 109 (VDYSLAAALTLHGHWGLGQVI) traverse the membrane as a helical segment. His-100 is a heme b binding site. The Mitochondrial matrix portion of the chain corresponds to 110–118 (TDYVHGDTP). An a ubiquinone-binding site is contributed by Tyr-112. A helical transmembrane segment spans residues 119 to 140 (IKVANTGLYVLSAITFTGLCYF). The Mitochondrial intermembrane portion of the chain corresponds to 141–157 (NYYDVGICKAVAMLWSI).

Belongs to the CybS family. Component of complex II composed of four subunits: the flavoprotein (FP) SDHA, iron-sulfur protein (IP) SDHB, and a cytochrome b560 composed of SDHC and SDHD.

Its subcellular location is the mitochondrion inner membrane. It participates in carbohydrate metabolism; tricarboxylic acid cycle. Its function is as follows. Membrane-anchoring subunit of succinate dehydrogenase (SDH) that is involved in complex II of the mitochondrial electron transport chain and is responsible for transferring electrons from succinate to ubiquinone (coenzyme Q). SDH also oxidizes malate to the non-canonical enol form of oxaloacetate, enol-oxaloacetate. Enol-oxaloacetate, which is a potent inhibitor of the succinate dehydrogenase activity, is further isomerized into keto-oxaloacetate. This Gallus gallus (Chicken) protein is Succinate dehydrogenase [ubiquinone] cytochrome b small subunit, mitochondrial (SDHD).